Reading from the N-terminus, the 136-residue chain is Putative nickel-responsive regulator (136 aa).

Residues His76, His87, His89, and Cys95 each contribute to the Ni(2+) site.

Belongs to the transcriptional regulatory CopG/NikR family. Ni(2+) serves as cofactor.

Functionally, transcriptional regulator. In Desulfotalea psychrophila (strain LSv54 / DSM 12343), this protein is Putative nickel-responsive regulator.